The following is a 216-amino-acid chain: Imidazole glycerol phosphate synthase subunit HisH (216 aa).

One can recognise a Glutamine amidotransferase type-1 domain in the interval 2 to 216 (RVAIIDYGSG…LISNFLRWKP (215 aa)). Cys-88 acts as the Nucleophile in catalysis. Residues His-196 and Glu-198 contribute to the active site.

Heterodimer of HisH and HisF.

The protein localises to the cytoplasm. It carries out the reaction 5-[(5-phospho-1-deoxy-D-ribulos-1-ylimino)methylamino]-1-(5-phospho-beta-D-ribosyl)imidazole-4-carboxamide + L-glutamine = D-erythro-1-(imidazol-4-yl)glycerol 3-phosphate + 5-amino-1-(5-phospho-beta-D-ribosyl)imidazole-4-carboxamide + L-glutamate + H(+). It catalyses the reaction L-glutamine + H2O = L-glutamate + NH4(+). Its pathway is amino-acid biosynthesis; L-histidine biosynthesis; L-histidine from 5-phospho-alpha-D-ribose 1-diphosphate: step 5/9. Functionally, IGPS catalyzes the conversion of PRFAR and glutamine to IGP, AICAR and glutamate. The HisH subunit catalyzes the hydrolysis of glutamine to glutamate and ammonia as part of the synthesis of IGP and AICAR. The resulting ammonia molecule is channeled to the active site of HisF. The sequence is that of Imidazole glycerol phosphate synthase subunit HisH from Rhizobium meliloti (strain 1021) (Ensifer meliloti).